Reading from the N-terminus, the 298-residue chain is Protein FAM221A (298 aa).

Residues 241–257 (SSPETLTDVGTSSQVSS) show a composition bias toward polar residues. The tract at residues 241-263 (SSPETLTDVGTSSQVSSLRRPEE) is disordered.

Belongs to the FAM221 family.

The polypeptide is Protein FAM221A (FAM221A) (Homo sapiens (Human)).